The chain runs to 112 residues: Small ribosomal subunit protein bS6 (112 aa).

The protein belongs to the bacterial ribosomal protein bS6 family.

Its function is as follows. Binds together with bS18 to 16S ribosomal RNA. The protein is Small ribosomal subunit protein bS6 of Christiangramia forsetii (strain DSM 17595 / CGMCC 1.15422 / KT0803) (Gramella forsetii).